Here is a 474-residue protein sequence, read N- to C-terminus: Type I restriction enzyme EcoBI specificity subunit (474 aa).

Belongs to the type-I restriction system S methylase family. The type I restriction/modification system is composed of three polypeptides R, M and S. The restriction enzyme has stoichiometry R(2)M(2)S(1) while the methyltransferase is M(2)S(1).

The specificity (S) subunit of a type I restriction enzyme; this subunit dictates DNA sequence specificity. The M and S subunits together form a methyltransferase (MTase) that methylates A-3 on the top strand and A-4 on the bottom strand of the sequence 5'-TGAN(8)TGCT-3'. In the presence of the R subunit the complex can also act as an endonuclease, binding to the same target sequence but cutting the DNA some distance from this site. Whether the DNA is cut or modified depends on the methylation state of the target sequence. When the target site is unmodified, the DNA is cut. When the target site is hemimethylated, the complex acts as a maintenance MTase modifying the DNA so that both strands become methylated. After locating a non-methylated recognition site, the enzyme complex serves as a molecular motor that translocates DNA in an ATP-dependent manner until a collision occurs that triggers cleavage. The polypeptide is Type I restriction enzyme EcoBI specificity subunit (Escherichia coli).